The primary structure comprises 192 residues: Fe/S biogenesis protein NfuA (192 aa).

Cys150 and Cys153 together coordinate [4Fe-4S] cluster.

This sequence belongs to the NfuA family. In terms of assembly, homodimer. It depends on [4Fe-4S] cluster as a cofactor.

Involved in iron-sulfur cluster biogenesis. Binds a 4Fe-4S cluster, can transfer this cluster to apoproteins, and thereby intervenes in the maturation of Fe/S proteins. Could also act as a scaffold/chaperone for damaged Fe/S proteins. This Buchnera aphidicola subsp. Acyrthosiphon pisum (strain APS) (Acyrthosiphon pisum symbiotic bacterium) protein is Fe/S biogenesis protein NfuA.